Reading from the N-terminus, the 75-residue chain is UPF0154 protein SERP0914 (75 aa).

Residues 3 to 23 form a helical membrane-spanning segment; it reads IWVAIILIVIALIAGLIGGFL.

It belongs to the UPF0154 family.

The protein localises to the membrane. The sequence is that of UPF0154 protein SERP0914 from Staphylococcus epidermidis (strain ATCC 35984 / DSM 28319 / BCRC 17069 / CCUG 31568 / BM 3577 / RP62A).